Consider the following 500-residue polypeptide: ATP synthase subunit alpha, sodium ion specific (500 aa).

An ATP-binding site is contributed by 169–176 (GDRQTGKT).

It belongs to the ATPase alpha/beta chains family. As to quaternary structure, F-type ATPases have 2 components, CF(1) - the catalytic core - and CF(0) - the membrane proton channel. CF(1) has five subunits: alpha(3), beta(3), gamma(1), delta(1), epsilon(1). CF(0) has three main subunits: a, b and c.

Its subcellular location is the cell membrane. It catalyses the reaction 4 Na(+)(in) + ATP + H2O = 4 Na(+)(out) + ADP + phosphate + H(+). Produces ATP from ADP in the presence of a sodium ion gradient across the membrane. The alpha chain is a regulatory subunit. The protein is ATP synthase subunit alpha, sodium ion specific of Propionigenium modestum.